The sequence spans 211 residues: Thymidylate kinase (211 aa).

7 to 14 (GIDASGKS) serves as a coordination point for ATP.

It belongs to the thymidylate kinase family.

The enzyme catalyses dTMP + ATP = dTDP + ADP. In terms of biological role, phosphorylation of dTMP to form dTDP in both de novo and salvage pathways of dTTP synthesis. The chain is Thymidylate kinase from Mesomycoplasma hyopneumoniae (strain 232) (Mycoplasma hyopneumoniae).